We begin with the raw amino-acid sequence, 300 residues long: MLIRAFIPAHITAFFVPVFHEEPLKAGSLGAGVNLSKGTNVFASIETGTLERHIHVAFNGEPVKREEAEITYYVAEKLVPKDFLGEVEVWQYFDFPNGYGFGNSAGGALGTALALSYAFGGTWLRAAQLAHEAEVKHKGGLGDVIGQLAGGIEVRIKPGGPGIGVTDNLFFEDYKVLVVPLGRLSTREVLDGDVVKAIEVEGRKALEELLKEPKPERMMVLARNFAEKTGLLPGELSEIARELDKVLKNPSSMIMLGKGLFALVRDEEAEKAKQLLSDMNLPYDIAEIYTERPKVGRWVG.

This sequence belongs to the GHMP kinase family. PoK subfamily. Homodimer.

It catalyses the reaction (R)-pantoate + ATP = (R)-4-phosphopantoate + ADP + H(+). Its pathway is cofactor biosynthesis; coenzyme A biosynthesis. Its activity is regulated as follows. Moderately stimulated in the presence of potassium cations. Inhibited by increasing concentrations of pantoate. Activity is not affected by CoA/acetyl-CoA. Functionally, phosphorylates (R)-pantoate to form (R)-4-phosphopantoate in the CoA biosynthesis pathway. Displays broad nucleotide specificity and utilizes ATP, GTP, UTP, and CTP with comparable catalytic efficiencies. In Thermococcus kodakarensis (strain ATCC BAA-918 / JCM 12380 / KOD1) (Pyrococcus kodakaraensis (strain KOD1)), this protein is Pantoate kinase.